The sequence spans 542 residues: uncharacterized protein (542 aa).

Residues alanine 125 to proline 138 show a composition bias toward low complexity. Disordered regions lie at residues alanine 125–asparagine 182, leucine 194–serine 333, serine 390–isoleucine 428, and serine 459–asparagine 487. Positions glutamine 202–isoleucine 213 are enriched in polar residues. Composition is skewed to low complexity over residues serine 228–asparagine 306, asparagine 314–serine 333, serine 390–asparagine 423, and serine 459–serine 479.

This is an uncharacterized protein from Dictyostelium discoideum (Social amoeba).